The following is a 202-amino-acid chain: Na(+)-translocating NADH-quinone reductase subunit E (202 aa).

6 helical membrane passes run 11 to 31 (SIFM…FLAV), 41 to 61 (LGVA…IIYF), 81 to 101 (FLGF…LEMV), 114 to 134 (GIYL…LFMV), 144 to 164 (LVYG…LAGI), and 180 to 200 (LGIT…FSGI).

It belongs to the NqrDE/RnfAE family. As to quaternary structure, composed of six subunits; NqrA, NqrB, NqrC, NqrD, NqrE and NqrF.

Its subcellular location is the cell inner membrane. The catalysed reaction is a ubiquinone + n Na(+)(in) + NADH + H(+) = a ubiquinol + n Na(+)(out) + NAD(+). NQR complex catalyzes the reduction of ubiquinone-1 to ubiquinol by two successive reactions, coupled with the transport of Na(+) ions from the cytoplasm to the periplasm. NqrA to NqrE are probably involved in the second step, the conversion of ubisemiquinone to ubiquinol. This is Na(+)-translocating NADH-quinone reductase subunit E from Psychromonas ingrahamii (strain DSM 17664 / CCUG 51855 / 37).